Reading from the N-terminus, the 99-residue chain is Large ribosomal subunit protein bL28 (99 aa).

This sequence belongs to the bacterial ribosomal protein bL28 family.

In Rhodospirillum rubrum (strain ATCC 11170 / ATH 1.1.1 / DSM 467 / LMG 4362 / NCIMB 8255 / S1), this protein is Large ribosomal subunit protein bL28.